The chain runs to 212 residues: Probable transaldolase (212 aa).

The active-site Schiff-base intermediate with substrate is lysine 83.

The protein belongs to the transaldolase family. Type 3B subfamily.

The protein localises to the cytoplasm. The enzyme catalyses D-sedoheptulose 7-phosphate + D-glyceraldehyde 3-phosphate = D-erythrose 4-phosphate + beta-D-fructose 6-phosphate. The protein operates within carbohydrate degradation; pentose phosphate pathway; D-glyceraldehyde 3-phosphate and beta-D-fructose 6-phosphate from D-ribose 5-phosphate and D-xylulose 5-phosphate (non-oxidative stage): step 2/3. In terms of biological role, transaldolase is important for the balance of metabolites in the pentose-phosphate pathway. This is Probable transaldolase (tal) from Halalkalibacterium halodurans (strain ATCC BAA-125 / DSM 18197 / FERM 7344 / JCM 9153 / C-125) (Bacillus halodurans).